The chain runs to 100 residues: Urease subunit gamma (100 aa).

The protein belongs to the urease gamma subunit family. Heterotrimer of UreA (gamma), UreB (beta) and UreC (alpha) subunits. Three heterotrimers associate to form the active enzyme.

The protein localises to the cytoplasm. The enzyme catalyses urea + 2 H2O + H(+) = hydrogencarbonate + 2 NH4(+). The protein operates within nitrogen metabolism; urea degradation; CO(2) and NH(3) from urea (urease route): step 1/1. This chain is Urease subunit gamma, found in Chelativorans sp. (strain BNC1).